The chain runs to 452 residues: MERRIFGLENEYGVTCTFRGQRRLSPDEVARYLFRRVVSWGRSSNVFLRNGARLYLDVGSHPEYATPECDNLLDLVAHDKAGERILEGLQIDAEQRLREEGIAGDIYLFKNNTDSAGNSYGCHENYLVARHGEFGKLADVLIPFLVTRQIICGAGKVLQTPRGALYCVSQRAEHIWEGVSSATTRSRPIINTRDEPHADAERFRRLHVIVGDSNMSETTTLLKLASTDLVLRMIEANVPMRDFTLENPIRAIREISHDMTGRRKVRLANGREASALEIQREYLERVQSFVDRTGTDATGKRVLELWQRTLEAVESGNLDLVAREIDWVAKYKLLERYRAKHGLSLSSPRVAQLDLTYHDIHRDRGLFYLLQQRGQMERVVSDLRIFEAKSVPPQTTRARLRGEFIKKAQEKRRDFTVDWVHLKLNDQAQRTVLCKDPFKAVDERVEKLIAGM.

Glutamate 9 provides a ligand contact to Mg(2+). Residue arginine 53 coordinates ATP. Tyrosine 55 is a binding site for Mg(2+). The active-site Proton acceptor is the aspartate 57. Position 63 (glutamate 63) interacts with Mg(2+). ATP-binding residues include threonine 66 and tryptophan 419.

Belongs to the Pup ligase/Pup deamidase family. Pup-conjugating enzyme subfamily.

The catalysed reaction is ATP + [prokaryotic ubiquitin-like protein]-L-glutamate + [protein]-L-lysine = ADP + phosphate + N(6)-([prokaryotic ubiquitin-like protein]-gamma-L-glutamyl)-[protein]-L-lysine.. Its pathway is protein degradation; proteasomal Pup-dependent pathway. It participates in protein modification; protein pupylation. Functionally, catalyzes the covalent attachment of the prokaryotic ubiquitin-like protein modifier Pup to the proteasomal substrate proteins, thereby targeting them for proteasomal degradation. This tagging system is termed pupylation. The ligation reaction involves the side-chain carboxylate of the C-terminal glutamate of Pup and the side-chain amino group of a substrate lysine. The polypeptide is Pup--protein ligase (Thermobifida fusca (strain YX)).